Consider the following 117-residue polypeptide: UPF0342 protein GWCH70_0629 (117 aa).

Belongs to the UPF0342 family.

In Geobacillus sp. (strain WCH70), this protein is UPF0342 protein GWCH70_0629.